The following is a 319-amino-acid chain: MATTKPYRVLLYYMYTTIENPEEFAAEHLEFCNSLELKGRILVAKEGINGTCSGTVEQTEKYMEAMNNDPRFDGIVFKIDEADGHAFKKMHVRPRPELVTLRLEDDINPHEITGKYLEPKDFYEAMKQEDTVIIDARNDYEFDLGHFKGAIKPDIESFRELPDWIRENKEVLEGKKILTYCTGGIRCEKFSGWLVREGYEDVSQLHGGIVTYGKDPEVQGELWDGQCYVFDERIAVPVNQKEHVIVGKDHFTGEPCERYVNCANPECNKKILCSEENEAKYLRACSHECRVSPRNRYVIQHELTEEQVAAALEKIEAGK.

The Rhodanese domain maps to 127–221 (KQEDTVIIDA…YGKDPEVQGE (95 aa)). Cys-181 (cysteine persulfide intermediate) is an active-site residue.

This sequence belongs to the TrhO family.

It carries out the reaction uridine(34) in tRNA + AH2 + O2 = 5-hydroxyuridine(34) in tRNA + A + H2O. Catalyzes oxygen-dependent 5-hydroxyuridine (ho5U) modification at position 34 in tRNAs. This chain is tRNA uridine(34) hydroxylase, found in Bacillus anthracis (strain A0248).